Consider the following 1274-residue polypeptide: Protein ECM30 (1274 aa).

Disordered stretches follow at residues 23–42 (EDAD…SLSV), 405–439 (RRAV…QTKP), and 494–517 (SSSS…DTSN). Low complexity-rich tracts occupy residues 27–42 (ASSP…SLSV), 409–432 (STSS…AAYH), and 494–515 (SSSS…SNDT). Residue Ser-635 is modified to Phosphoserine. Residues 803 to 822 (NQQHQNQQQGQNDNRGQNQN) are compositionally biased toward low complexity. The segment at 803 to 842 (NQQHQNQQQGQNDNRGQNQNEDPGQENESPTPYLLFNPAS) is disordered. Ser-1065 bears the Phosphoserine mark. Positions 1100 to 1149 (HLRSSSSSSSITLEKTTSNSSSIRTRPNSHHVAPETNNNNSTNGNSNNSS) are disordered. Positions 1110 to 1125 (ITLEKTTSNSSSIRTR) are enriched in polar residues. Positions 1135 to 1149 (TNNNNSTNGNSNNSS) are enriched in low complexity.

The protein resides in the cytoplasm. Functionally, seems to be involved in cell wall organization and biogenesis. In Saccharomyces cerevisiae (strain ATCC 204508 / S288c) (Baker's yeast), this protein is Protein ECM30 (ECM30).